The primary structure comprises 352 residues: tRNA pseudouridine synthase D (352 aa).

Asp81 acts as the Nucleophile in catalysis. A TRUD domain is found at 157 to 303 (GVPNYFGLQR…MAHERRILRL (147 aa)).

It belongs to the pseudouridine synthase TruD family.

The enzyme catalyses uridine(13) in tRNA = pseudouridine(13) in tRNA. In terms of biological role, responsible for synthesis of pseudouridine from uracil-13 in transfer RNAs. The polypeptide is tRNA pseudouridine synthase D (Ectopseudomonas mendocina (strain ymp) (Pseudomonas mendocina)).